Reading from the N-terminus, the 766-residue chain is 5-methyltetrahydropteroyltriglutamate--homocysteine methyltransferase (766 aa).

Residues 16 to 19 (RELK) and Lys-119 each bind 5-methyltetrahydropteroyltri-L-glutamate. L-homocysteine contacts are provided by residues 440–442 (IGS) and Glu-493. L-methionine-binding positions include 440–442 (IGS) and Glu-493. 5-methyltetrahydropteroyltri-L-glutamate-binding positions include 524-525 (RC) and Trp-570. Position 608 (Asp-608) interacts with L-homocysteine. Asp-608 serves as a coordination point for L-methionine. A 5-methyltetrahydropteroyltri-L-glutamate-binding site is contributed by Glu-614. Residues His-650, Cys-652, and Glu-674 each contribute to the Zn(2+) site. The active-site Proton donor is His-703. A Zn(2+)-binding site is contributed by Cys-735.

This sequence belongs to the vitamin-B12 independent methionine synthase family. The cofactor is Zn(2+).

The catalysed reaction is 5-methyltetrahydropteroyltri-L-glutamate + L-homocysteine = tetrahydropteroyltri-L-glutamate + L-methionine. The protein operates within amino-acid biosynthesis; L-methionine biosynthesis via de novo pathway; L-methionine from L-homocysteine (MetE route): step 1/1. Its function is as follows. Catalyzes the transfer of a methyl group from 5-methyltetrahydrofolate to homocysteine resulting in methionine formation. The polypeptide is 5-methyltetrahydropteroyltriglutamate--homocysteine methyltransferase (Pseudomonas aeruginosa (strain UCBPP-PA14)).